Here is a 502-residue protein sequence, read N- to C-terminus: Interleukin-17 receptor B (502 aa).

An N-terminal signal peptide occupies residues 1 to 17; the sequence is MSLVLLSLAALCRSAVP. The Extracellular segment spans residues 18 to 292; sequence REPTVQCGSE…NKSKPGGWLP (275 aa). N-linked (GlcNAc...) asparagine glycosylation is found at Asn-67, Asn-103, Asn-156, Asn-183, Asn-197, and Asn-283. A helical membrane pass occupies residues 293–313; that stretch reads LLLLSLLVATWVLVAGIYLMW. Over 314-502 the chain is Cytoplasmic; sequence RHERIKKTSF…QACHDGCCSL (189 aa). The SEFIR domain occupies 331–477; it reads PIKVLVVYPS…LMKDATAFCA (147 aa).

As to quaternary structure, interacts with DAZAP2. Interacts with TRAF3IP2. As to expression, expressed in several endocrine tissues, mostly in fetal and adult liver, kidney, pancreas, testis, colon, brain and small intestine; not detected in peripheral blood leukocytes, lymphoid organs, and most cell lines.

Its subcellular location is the cell membrane. It localises to the secreted. Receptor for the pro-inflammatory cytokines IL17B and IL17E. May play a role in controlling the growth and/or differentiation of hematopoietic cells. The chain is Interleukin-17 receptor B (IL17RB) from Homo sapiens (Human).